Reading from the N-terminus, the 415-residue chain is UDP-N-acetylglucosamine 1-carboxyvinyltransferase 1 (415 aa).

Residue 23 to 24 (KN) coordinates phosphoenolpyruvate. Arginine 92 lines the UDP-N-acetyl-alpha-D-glucosamine pocket. Cysteine 116 serves as the catalytic Proton donor. At cysteine 116 the chain carries 2-(S-cysteinyl)pyruvic acid O-phosphothioketal. UDP-N-acetyl-alpha-D-glucosamine is bound by residues 121-125 (RPIDL), aspartate 304, and valine 326.

Belongs to the EPSP synthase family. MurA subfamily.

Its subcellular location is the cytoplasm. The enzyme catalyses phosphoenolpyruvate + UDP-N-acetyl-alpha-D-glucosamine = UDP-N-acetyl-3-O-(1-carboxyvinyl)-alpha-D-glucosamine + phosphate. The protein operates within cell wall biogenesis; peptidoglycan biosynthesis. Its function is as follows. Cell wall formation. Adds enolpyruvyl to UDP-N-acetylglucosamine. The protein is UDP-N-acetylglucosamine 1-carboxyvinyltransferase 1 of Caldanaerobacter subterraneus subsp. tengcongensis (strain DSM 15242 / JCM 11007 / NBRC 100824 / MB4) (Thermoanaerobacter tengcongensis).